The primary structure comprises 440 residues: 5-methylthioadenosine/S-adenosylhomocysteine deaminase (440 aa).

2 residues coordinate Zn(2+): histidine 70 and histidine 72. Residues glutamate 99 and histidine 191 each contribute to the substrate site. Histidine 218 contacts Zn(2+). Substrate-binding residues include glutamate 221 and aspartate 306. Aspartate 306 lines the Zn(2+) pocket.

The protein belongs to the metallo-dependent hydrolases superfamily. MTA/SAH deaminase family. Zn(2+) serves as cofactor.

It carries out the reaction S-adenosyl-L-homocysteine + H2O + H(+) = S-inosyl-L-homocysteine + NH4(+). It catalyses the reaction S-methyl-5'-thioadenosine + H2O + H(+) = S-methyl-5'-thioinosine + NH4(+). In terms of biological role, catalyzes the deamination of 5-methylthioadenosine and S-adenosyl-L-homocysteine into 5-methylthioinosine and S-inosyl-L-homocysteine, respectively. Is also able to deaminate adenosine. The protein is 5-methylthioadenosine/S-adenosylhomocysteine deaminase of Nitratidesulfovibrio vulgaris (strain DSM 19637 / Miyazaki F) (Desulfovibrio vulgaris).